A 196-amino-acid polypeptide reads, in one-letter code: Potassium-transporting ATPase KdpC subunit (196 aa).

A helical transmembrane segment spans residues 7–27 (PAIVSAGLFTVLLGLAYPLAV).

Belongs to the KdpC family. As to quaternary structure, the system is composed of three essential subunits: KdpA, KdpB and KdpC.

The protein resides in the cell inner membrane. Its function is as follows. Part of the high-affinity ATP-driven potassium transport (or Kdp) system, which catalyzes the hydrolysis of ATP coupled with the electrogenic transport of potassium into the cytoplasm. This subunit acts as a catalytic chaperone that increases the ATP-binding affinity of the ATP-hydrolyzing subunit KdpB by the formation of a transient KdpB/KdpC/ATP ternary complex. In Caulobacter sp. (strain K31), this protein is Potassium-transporting ATPase KdpC subunit.